The primary structure comprises 392 residues: Cell division protein DivIB (392 aa).

The disordered stretch occupies residues 1–88 (MSEKDNNLTP…TQSSEAPIEN (88 aa)). Residues 1 to 131 (MSEKDNNLTP…KGSAPLLKKM (131 aa)) are Cytoplasmic-facing. The span at 14 to 32 (KHLEYQKRKAEEAKKEKKA) shows a compositional bias: basic and acidic residues. Over residues 58 to 76 (TRDEAESAELLEEGFETNN) the composition is skewed to acidic residues. The chain crosses the membrane as a helical span at residues 132 to 152 (WPALAVVVLVFVGSLYLISPL). Positions 153 to 224 (SKISTFSVSG…NRFEAIVKEH (72 aa)) constitute a POTRA domain. The Extracellular segment spans residues 153–392 (SKISTFSVSG…TAQSTTTSSN (240 aa)). The disordered stretch occupies residues 368-392 (ISAQNAKKTDASSENTAQSTTTSSN).

Belongs to the FtsQ/DivIB family. DivIB subfamily.

The protein resides in the cell membrane. In terms of biological role, cell division protein that may be involved in stabilizing or promoting the assembly of the division complex. The chain is Cell division protein DivIB from Lactococcus lactis subsp. lactis (strain KF147).